Consider the following 422-residue polypeptide: Gamma-glutamyl phosphate reductase (422 aa).

It belongs to the gamma-glutamyl phosphate reductase family.

Its subcellular location is the cytoplasm. It catalyses the reaction L-glutamate 5-semialdehyde + phosphate + NADP(+) = L-glutamyl 5-phosphate + NADPH + H(+). It participates in amino-acid biosynthesis; L-proline biosynthesis; L-glutamate 5-semialdehyde from L-glutamate: step 2/2. Catalyzes the NADPH-dependent reduction of L-glutamate 5-phosphate into L-glutamate 5-semialdehyde and phosphate. The product spontaneously undergoes cyclization to form 1-pyrroline-5-carboxylate. The chain is Gamma-glutamyl phosphate reductase from Chlorobium phaeovibrioides (strain DSM 265 / 1930) (Prosthecochloris vibrioformis (strain DSM 265)).